Here is a 486-residue protein sequence, read N- to C-terminus: Keratin, type II cuticular Hb6 (486 aa).

A head region spans residues 1–106; sequence MTCGSYCGGR…PNAQCVKHEE (106 aa). Positions 106–417 constitute an IF rod domain; it reads EKEQIKCLNS…RLLEGEEQRL (312 aa). Positions 107 to 141 are coil 1A; that stretch reads KEQIKCLNSKFAAFIDKVRFLEQQNKLLETKWQFY. Positions 142–151 are linker 1; it reads QNRKCCESNM. The segment at 152–252 is coil 1B; it reads EPLFEGYIEA…YDEETRILHS (101 aa). A Glycyl lysine isopeptide (Lys-Gly) (interchain with G-Cter in SUMO1) cross-link involves residue K212. Residues 253-269 are linker 12; it reads HISDTSIVVKMDNSRDL. Positions 270 to 413 are coil 2; sequence NMDCVVAEIK…TTYRRLLEGE (144 aa). A tail region spans residues 414 to 486; it reads EQRLCEGVGS…GACSGGCKKC (73 aa).

It belongs to the intermediate filament family. In terms of assembly, heterotetramer of two type I and two type II keratins.

In Mus musculus (Mouse), this protein is Keratin, type II cuticular Hb6 (Krt86).